We begin with the raw amino-acid sequence, 173 residues long: Calcium-binding protein 5 (173 aa).

EF-hand domains are found at residues 28-63, 82-99, 105-140, and 142-173; these read DEIEELREAFLEFDKDRDGFISCKDLGNLMRTMGYM, GRVDFDDFVELMTPKLLA, IGVQEMRDAFKEFDTNGDGEITLVELQQAMQRLLGE, and LTPREISEVVREADVNGDGTVDFEEFVKMMSR. Ca(2+)-binding residues include aspartate 41, aspartate 43, aspartate 45, and aspartate 52. Residues aspartate 118, asparagine 120, aspartate 122, glutamate 124, glutamate 129, aspartate 155, asparagine 157, aspartate 159, threonine 161, and glutamate 166 each contribute to the Ca(2+) site.

In terms of assembly, interacts with CACNA1C (via C-terminal CDB motif) in a calcium-dependent manner. Interacts with STXBP1. Interacts with MYO6. Retina.

The protein localises to the cytoplasm. Its function is as follows. Inhibits calcium-dependent inactivation of L-type calcium channel and shifts voltage dependence of activation to more depolarized membrane potentials. Involved in the transmission of light signals. May positively regulate neurotransmitter vesicle endocytosis and exocytosis in a salt-dependent manner. May play a role in the extension and network organization of neurites. This is Calcium-binding protein 5 (CABP5) from Homo sapiens (Human).